Reading from the N-terminus, the 54-residue chain is Apelin receptor early endogenous ligand (54 aa).

A signal peptide spans 1-22 (MRFQQFLFAFFIFIMSLLLISG). An N-linked (GlcNAc...) asparagine glycan is attached at Asn27.

Belongs to the Elabela/Toddler family. In terms of assembly, interacts with APLNR. As to expression, expressed in the intima of blood vessels. Expressed in endothelial cells in blood vessels in the heart and lung. Expressed in cytotrophoblasts and syncytiotrophoblasts of first-trimester placental tissue and term placentas (at protein level). Not detected in smooth muscle cells or cardiomyocytes (at protein level). Expressed in kidney. Expressed in blood vessels. Expressed in embryonic (ESCs) and induced (iPSCs) pluripotent stem cells. Most highly expressed in undifferentiated embryonic stem cell and is rapidly down-regulated during differentiation.

It localises to the secreted. It is found in the extracellular space. Peptide hormone that functions as endogenous ligand for the G-protein-coupled apelin receptor (APLNR/APJ), that plays a role in the regulation of normal cardiovascular function and fluid homeostasis. Functions as a balanced agonist activating both G(i) protein pathway and beta-arrestin pathway of APLNR. Downstream G proteins activation, apelin can inhibit cAMP production and activate key intracellular effectors such as ERKs. On the other hand, APLNR activation induces beta-arrestin recruitment to the membrane leading to desensitization and internalization of the receptor. Required for mesendodermal differentiation, blood vessels formation and heart morphogenesis during early development and for adult cardiovascular homeostasis. Acts as a motogen by promoting mesendodermal cell migration during gastrulation by binding and activating APLNR. Acts as an early embryonic regulator of cellular movement with a role in migration and development of cardiac progenitor cells. May act as a chemoattractant for the activation of angioblast migration toward the embryonic midline, i.e. the position of the future vessel formation, during vasculogenesis. Positively regulates sinus venosus (SV)-derived endothelial cells migration into the developing heart to promote coronary blood vessel sprouting. Plays a role in placental vascular development; promotes placental trophoblast invasion and spiral artery remodeling in the uterus. Involved in the regulation of maternal cardiovascular homeostasis to prevent gestational hypertension and for potent cardioprotective functions during heart failure. Mediates myocardial contractility in an ERK1/2-dependent manner. This chain is Apelin receptor early endogenous ligand, found in Homo sapiens (Human).